The primary structure comprises 477 residues: Glycogen synthase 1 (477 aa).

Residue K15 participates in ADP-alpha-D-glucose binding.

The protein belongs to the glycosyltransferase 1 family. Bacterial/plant glycogen synthase subfamily.

It carries out the reaction [(1-&gt;4)-alpha-D-glucosyl](n) + ADP-alpha-D-glucose = [(1-&gt;4)-alpha-D-glucosyl](n+1) + ADP + H(+). It functions in the pathway glycan biosynthesis; glycogen biosynthesis. Its function is as follows. Synthesizes alpha-1,4-glucan chains using ADP-glucose. This Synechocystis sp. (strain ATCC 27184 / PCC 6803 / Kazusa) protein is Glycogen synthase 1 (glgA1).